Reading from the N-terminus, the 337-residue chain is Palmitoyltransferase ZDHHC15 (337 aa).

The Cytoplasmic portion of the chain corresponds to Met1 to Leu20. Residues Ser21–Phe41 form a helical membrane-spanning segment. The Lumenal segment spans residues Glu42–Ile56. A helical transmembrane segment spans residues Tyr57–Phe77. Topologically, residues Thr78–Lys172 are cytoplasmic. In terms of domain architecture, DHHC spans Arg129–Ala179. Cys131, Cys134, His144, Cys145, Cys148, Cys151, and His158 together coordinate Zn(2+). Catalysis depends on Cys159, which acts as the S-palmitoyl cysteine intermediate. Cys165 provides a ligand contact to Zn(2+). A helical transmembrane segment spans residues Phe173–Phe193. Residues Ser194–Lys210 lie on the Lumenal side of the membrane. The helical transmembrane segment at Phe211 to His234 threads the bilayer. The Cytoplasmic segment spans residues Cys235–Thr337. Positions His293–Thr337 are disordered. Residues Glu312–Ser321 are compositionally biased toward acidic residues. Residues Gly327–Thr337 show a composition bias toward polar residues.

It belongs to the DHHC palmitoyltransferase family. In terms of processing, autopalmitoylated (in vitro). In terms of tissue distribution, expressed mainly in brain.

It is found in the golgi apparatus membrane. It localises to the postsynaptic density. It catalyses the reaction L-cysteinyl-[protein] + hexadecanoyl-CoA = S-hexadecanoyl-L-cysteinyl-[protein] + CoA. The enzyme catalyses L-cysteinyl-[protein] + tetradecanoyl-CoA = S-tetradecanoyl-L-cysteinyl-[protein] + CoA. It carries out the reaction L-cysteinyl-[protein] + octadecanoyl-CoA = S-octadecanoyl-L-cysteinyl-[protein] + CoA. With respect to regulation, inhibited by 2-bromopalmitate. Palmitoyltransferase that catalyzes the addition of palmitate onto various protein substrates. Has no stringent fatty acid selectivity and in addition to palmitate can also transfer onto target proteins myristate from tetradecanoyl-CoA and stearate from octadecanoyl-CoA. Palmitoylates IGF2R and SORT1, promoting their partitioning to an endosomal membrane subdomain where they can interact with the retromer cargo-selective complex. Thereby, regulates retrograde transport from endosomes to the Golgi apparatus of these lysosomal sorting receptors and plays a role in trafficking of lysosomal proteins. In the nervous system, catalyzes the palmitoylation of DLG4/PSD95 and regulates its synaptic clustering and function in synaptogenesis. Could be involved in the differentiation of dopaminergic neurons and the development of the diencephalon. Could also catalyze the palmitoylation of GAP43. Could also palmitoylate DNAJC5 and regulate its localization to the Golgi membrane. Could also palmitoylate FYN as shown in vitro. May palmitoylate CALHM3 subunit of gustatory voltage-gated ion channels and modulate channel gating and kinetics. This is Palmitoyltransferase ZDHHC15 from Mus musculus (Mouse).